The chain runs to 256 residues: NifU-like protein, mitochondrial (256 aa).

The CxxC motif signature appears at C196–C199.

The protein belongs to the NifU family. In terms of assembly, homodimer; in absence of BOL3, probably bridged by an iron-sulfure cluster. Interacts with BOL3. Interacts with apo-target proteins, such as ACO1, LYS4, ACO2 and SDH2.

The protein resides in the mitochondrion matrix. Functionally, involved in iron homeostasis within the mitochondrion where it is involved in the assembly of iron-sulfur proteins. Together with BOL3, required during the last step of iron-sulfur protein assembly when the iron-sulfur cluster is inserted into the target protein. Required for protecting iron sulfur clusters from oxidative damage. The protein is NifU-like protein, mitochondrial (NFU1) of Saccharomyces cerevisiae (strain ATCC 204508 / S288c) (Baker's yeast).